A 1163-amino-acid polypeptide reads, in one-letter code: E3 ubiquitin-protein ligase TRIM33 (1163 aa).

Residues 1 to 119 (MEVEASGTED…ASTSSSSSTP (119 aa)) are disordered. Basic and acidic residues predominate over residues 27-38 (TETKEAADEAKS). Residues 45 to 54 (TPTTSSDSSS) show a composition bias toward low complexity. Positions 72-87 (DPPPPPPPPPPPPPST) are enriched in pro residues. Positions 88–99 (PADSTAAAASPA) are enriched in low complexity. The RING-type zinc-finger motif lies at 129-188 (CAVCKQSLQNRDCEPKLLPCLHSFCLKCIPQPDRKITMPVQGPHGQDTRIVNVMRCTVCH). The B box-type 1; atypical zinc-finger motif lies at 215-268 (NSTQVCTSCEDNASAIGFCVECGEWLCKTCIEAHQRVKFTKDHKIRKKEEVSPE). Positions 220, 223, 244, 257, 280, 283, 303, and 308 each coordinate Zn(2+). The B box-type 2 zinc-finger motif lies at 275-316 (QRPVFCPVHKQEALKLFCETCDTLTCRDCQLLEHKEHRYQFL). Residues 345-369 (ASEVQKRLKEVAETHKKVEHEIKIA) adopt a coiled-coil conformation. Positions 524–533 (MQQAAIAQKH) are enriched in low complexity. Disordered regions lie at residues 524 to 555 (MQQAAIAQKHQQQHQHHQQQQHQHQHQQQQQQ), 575 to 599 (QIQQQMRIASQMSQHPRQGAPQMIQ), 656 to 706 (LQRQ…VITP), 753 to 848 (TVGP…PLPI), and 867 to 918 (NVKS…KEDD). Basic residues predominate over residues 534 to 548 (QQQHQHHQQQQHQHQ). The segment covering 580-590 (MRIASQMSQHP) has biased composition (polar residues). Low complexity-rich tracts occupy residues 678 to 691 (SAANPTSPTSASMA) and 753 to 797 (TVGP…SGTT). Positions 821–830 (KTERTKDGRR) are enriched in basic and acidic residues. The span at 870–889 (SEPQSDNLSSCTNPNSRATL) shows a compositional bias: polar residues. The PHD-type zinc-finger motif lies at 921 to 968 (EDWCAVCQNGGELLCCDHCPKVFHITCHIPTLKSSPSGDWMCTFCRNL). The Bromo domain occupies 991-1114 (AMSPEEQRRC…LYFEERLLEI (124 aa)). The segment at 1128–1147 (TQIEAEKEDSDDSDDDIIQP) is disordered. The span at 1133–1144 (EKEDSDDSDDDI) shows a compositional bias: acidic residues.

It is found in the nucleus. It catalyses the reaction S-ubiquitinyl-[E2 ubiquitin-conjugating enzyme]-L-cysteine + [acceptor protein]-L-lysine = [E2 ubiquitin-conjugating enzyme]-L-cysteine + N(6)-ubiquitinyl-[acceptor protein]-L-lysine.. Its pathway is protein modification; protein ubiquitination. May act as an E3 ubiquitin-protein ligase and a transcriptional repressor. Involved in the regulation of embryonic and adult hematopoiesis. Required for normal development and survival of both committed erythroid progenitor cells and posterior mesenchymal cells. The polypeptide is E3 ubiquitin-protein ligase TRIM33 (trim33) (Danio rerio (Zebrafish)).